A 329-amino-acid polypeptide reads, in one-letter code: (+)-eremophilene synthase (329 aa).

Residues aspartate 91 and glutamate 96 each contribute to the Mg(2+) site. The DDXXD motif signature appears at 91–95 (DDAYD). Arginine 185 is a substrate binding site. 2 residues coordinate Mg(2+): asparagine 231 and serine 235. Lysine 238 serves as a coordination point for substrate. Glutamate 239 serves as a coordination point for Mg(2+). 317–318 (RY) is a substrate binding site.

The protein belongs to the terpene synthase family. Requires Mg(2+) as cofactor.

The catalysed reaction is (2E,6E)-farnesyl diphosphate = (+)-eremophilene + diphosphate. It functions in the pathway secondary metabolite biosynthesis; terpenoid biosynthesis. Catalyzes the conversion of (2E,6E)-farnesyl diphosphate (FPP) to yield the bicyclic sesquiterpene eremophilene via a 1,10-cyclization, which requires the abstraction of the pyrophosphate from FPP to yield the (E,E)-germacradienyl cation. The only accepted substrate is farnesyl diphosphate (FPP). In Sorangium cellulosum (strain So ce56) (Polyangium cellulosum (strain So ce56)), this protein is (+)-eremophilene synthase.